The sequence spans 509 residues: Scavenger receptor class B member 1 (509 aa).

Topologically, residues 1-11 are cytoplasmic; that stretch reads MGSRSRARQVA. The helical transmembrane segment at 12 to 32 threads the bilayer; the sequence is AALGFVGLLLAALGAVMIVMV. Residues 33-439 lie on the Extracellular side of the membrane; the sequence is PSIIKQQVLK…FYTQLVLMPK (407 aa). Residues Asn102, Asn108, Asn173, Asn212, Asn255, Asn310, Asn330, and Asn383 are each glycosylated (N-linked (GlcNAc...) asparagine). A disulfide bond links Cys251 and Cys384. Residues 440–460 traverse the membrane as a helical segment; it reads VLHYAQYVLLALGCVLLFIPI. The Cytoplasmic segment spans residues 461–509; the sequence is VYQIRSQEKCYLFWSSSKKGSKDKEAIQAYSESLMTPAPKGTVLQEARL.

Belongs to the CD36 family. As to quaternary structure, the C-terminal region binds to PDZK1. N-glycosylated. Post-translationally, the six cysteines of the extracellular domain are all involved in intramolecular disulfide bonds.

Its subcellular location is the cell membrane. It localises to the membrane. It is found in the caveola. In terms of biological role, receptor for different ligands such as phospholipids, cholesterol ester, lipoproteins, phosphatidylserine and apoptotic cells. Receptor for HDL, mediating selective uptake of cholesteryl ether and HDL-dependent cholesterol efflux. Also facilitates the flux of free and esterified cholesterol between the cell surface and apoB-containing lipoproteins and modified lipoproteins, although less efficiently than HDL. May be involved in the phagocytosis of apoptotic cells, via its phosphatidylserine binding activity. This Sus scrofa (Pig) protein is Scavenger receptor class B member 1 (SCARB1).